The chain runs to 339 residues: UPF0324 membrane protein M6_Spy0799 (339 aa).

9 consecutive transmembrane segments (helical) span residues 7–24 (KLPG…AWYL), 28–50 (FPII…FYEH), 57–79 (GISF…GLNL), 84–106 (AVGM…VAYG), 118–140 (ATLV…APVI), 150–172 (AISV…GQLL), 256–275 (FILF…SLGV), 290–307 (FIVM…LVKL), and 314–336 (AILL…QLSL).

Belongs to the UPF0324 family.

Its subcellular location is the cell membrane. This is UPF0324 membrane protein M6_Spy0799 from Streptococcus pyogenes serotype M6 (strain ATCC BAA-946 / MGAS10394).